The chain runs to 978 residues: Regulator of telomere elongation helicase 1 homolog (978 aa).

One can recognise a Helicase ATP-binding domain in the interval 7 to 318 (NGIPVNFPFE…EDDDAKKDFT (312 aa)). Position 42–49 (42–49 (SPTGTGKT)) interacts with ATP. The [4Fe-4S] cluster site is built by Cys-159, Cys-177, Cys-186, and Cys-222. Positions 265–268 (DEAH) match the DEAH box motif.

Belongs to the helicase family. RAD3/XPD subfamily.

Its subcellular location is the nucleus. The enzyme catalyses ATP + H2O = ADP + phosphate + H(+). In terms of biological role, a probable ATP-dependent DNA helicase implicated in DNA repair and the maintenance of genomic stability. Acts as an anti-recombinase to counteract toxic recombination and limit crossover during meiosis. Regulates meiotic recombination and crossover homeostasis by physically dissociating strand invasion events and thereby promotes noncrossover repair by meiotic synthesis dependent strand annealing (SDSA) as well as disassembly of D loop recombination intermediates. The chain is Regulator of telomere elongation helicase 1 homolog from Culex quinquefasciatus (Southern house mosquito).